A 305-amino-acid chain; its full sequence is Alpha-N-acetylgalactosaminide alpha-2,6-sialyltransferase 3 (305 aa).

At 1–8 (MACILKRK) the chain is on the cytoplasmic side. The helical; Signal-anchor for type II membrane protein transmembrane segment at 9–29 (PALAVSFIALCILLLAMRLAN) threads the bilayer. At 30–305 (DVTFPLLLNC…VFTHPNWTVS (276 aa)) the chain is on the lumenal side. Cysteine 80 and cysteine 229 are oxidised to a cystine. N-linked (GlcNAc...) asparagine glycosylation is found at asparagine 239 and asparagine 301.

It belongs to the glycosyltransferase 29 family. In adults it is highly expressed in spleen, followed by kidney and lesser in lung. Not found in liver and skeletal muscle. In newborns it is abundantly expressed in brain and kidney.

Its subcellular location is the golgi apparatus membrane. The enzyme catalyses an alpha-Neu5Ac-(2-&gt;3)-beta-D-Gal-(1-&gt;3)-D-GlcNAc derivative + CMP-N-acetyl-beta-neuraminate = an alpha-Neu5Ac-(2-&gt;3)-beta-D-Gal-(1-&gt;3)-[alpha-Neu5Ac-(2-&gt;6)]-D-GlcNAc derivative + CMP + H(+). The catalysed reaction is a ganglioside GM1b + CMP-N-acetyl-beta-neuraminate = a ganglioside GD1alpha + CMP + H(+). It carries out the reaction a ganglioside GM1b (d18:1(4E)) + CMP-N-acetyl-beta-neuraminate = a ganglioside GD1alpha (d18:1(4E)) + CMP + H(+). It catalyses the reaction a globoside MSGG + CMP-N-acetyl-beta-neuraminate = a globoside DSGG + CMP + H(+). The enzyme catalyses 3-O-[alpha-Neu5Ac-(2-&gt;3)-beta-D-Gal-(1-&gt;3)-alpha-D-GalNAc]-L-Ser-[protein] + CMP-N-acetyl-beta-neuraminate = a 3-O-{alpha-Neu5Ac-(2-&gt;3)-beta-D-Gal-(1-&gt;3)-[alpha-Neu5Ac-(2-&gt;6)]-alpha-D-GalNAc}-L-seryl-[protein] + CMP + H(+). The catalysed reaction is 3-O-[alpha-Neu5Ac-(2-&gt;3)-beta-D-Gal-(1-&gt;3)-alpha-D-GalNAc]-L-Thr-[protein] + CMP-N-acetyl-beta-neuraminate = a 3-O-{alpha-Neu5Ac-(2-&gt;3)-beta-D-Gal-(1-&gt;3)-[alpha-Neu5Ac-(2-&gt;6)]-alpha-D-GalNAc}-L-threonyl-[protein] + CMP + H(+). It functions in the pathway protein modification; protein glycosylation. It participates in glycolipid biosynthesis. Its function is as follows. Transfers the sialyl group (N-acetyl-alpha-neuraminyl or NeuAc) from CMP-NeuAc to the GalNAc residue on the NeuAc-alpha-2,3-Gal-beta-1,3-GalNAc sequence of glycoproteins and glycolipids forming an alpha-2,6-linkage. Produces branched type disialyl structures by transfer of a sialyl group onto a GalNAc residue inside the backbone core chains. ST6GalNAcIII prefers glycolipids to glycoproteins, predominantly catalyzing the biosynthesis of ganglioside GD1alpha from GM1b. GD1alpha is a critical molecule in the communication and interaction between neuronal cells and their supportive cells, particularly in brain tissues, and functions as an adhesion molecule in the process of metastasis. Sialylation of glycoproteins or glycosphingolipids is very important in tumor development, neuronal development, nerve repair, immunological processes and regulation of hormone sensitivity. This chain is Alpha-N-acetylgalactosaminide alpha-2,6-sialyltransferase 3 (St6galnac3), found in Rattus norvegicus (Rat).